The following is a 187-amino-acid chain: ATP-dependent protease subunit HslV (187 aa).

Residue threonine 13 is part of the active site. Residues alanine 172, cysteine 175, and threonine 178 each contribute to the Na(+) site.

This sequence belongs to the peptidase T1B family. HslV subfamily. In terms of assembly, a double ring-shaped homohexamer of HslV is capped on each side by a ring-shaped HslU homohexamer. The assembly of the HslU/HslV complex is dependent on binding of ATP.

It localises to the cytoplasm. It catalyses the reaction ATP-dependent cleavage of peptide bonds with broad specificity.. With respect to regulation, allosterically activated by HslU binding. Protease subunit of a proteasome-like degradation complex believed to be a general protein degrading machinery. In Caulobacter sp. (strain K31), this protein is ATP-dependent protease subunit HslV.